The following is a 505-amino-acid chain: Catalase (505 aa).

Residues His56 and Asn129 contribute to the active site. Tyr339 serves as a coordination point for heme.

It belongs to the catalase family. The cofactor is heme.

Its subcellular location is the cytoplasm. It catalyses the reaction 2 H2O2 = O2 + 2 H2O. In terms of biological role, decomposes hydrogen peroxide into water and oxygen; serves to protect cells from the toxic effects of hydrogen peroxide. The sequence is that of Catalase (katA) from Helicobacter pylori (strain ATCC 700392 / 26695) (Campylobacter pylori).